A 484-amino-acid chain; its full sequence is Poly(A) RNA polymerase GLD2 (484 aa).

Phosphoserine occurs at positions 62 and 69. Residues 76-92 (KRLSDEKNLPLDGKRQR) carry the Nuclear localization signal motif. Ser-95 bears the Phosphoserine mark. Mg(2+) contacts are provided by Asp-213 and Asp-215. In terms of domain architecture, PAP-associated spans 386 to 440 (NLGDLLLGFLKYYATEFDWNSQMISVREAKAIPRPDGIEWRNKYICVEEPFDGTN).

Belongs to the DNA polymerase type-B-like family. GLD2 subfamily. In terms of assembly, interacts with CPEB1, CPEB2, CPSF1 and PABPC1. Interacts with QKI isoform QKI7; promoting recruitment to miRNA miR-122 and miR-122 stabilization. Requires Mg(2+) as cofactor. Mn(2+) serves as cofactor.

The protein localises to the cytoplasm. It is found in the nucleus. It carries out the reaction RNA(n) + ATP = RNA(n)-3'-adenine ribonucleotide + diphosphate. Cytoplasmic poly(A) RNA polymerase that adds successive AMP monomers to the 3'-end of specific RNAs, forming a poly(A) tail. In contrast to the canonical nuclear poly(A) RNA polymerase, it only adds poly(A) to selected cytoplasmic mRNAs. Does not play a role in replication-dependent histone mRNA degradation. Adds a single nucleotide to the 3' end of specific miRNAs, monoadenylation stabilizes and prolongs the activity of some but not all miRNAs. The polypeptide is Poly(A) RNA polymerase GLD2 (Bos taurus (Bovine)).